Consider the following 86-residue polypeptide: Small ribosomal subunit protein bS18 (86 aa).

The protein belongs to the bacterial ribosomal protein bS18 family. Part of the 30S ribosomal subunit. Forms a tight heterodimer with protein bS6.

Binds as a heterodimer with protein bS6 to the central domain of the 16S rRNA, where it helps stabilize the platform of the 30S subunit. This Herpetosiphon aurantiacus (strain ATCC 23779 / DSM 785 / 114-95) protein is Small ribosomal subunit protein bS18.